The chain runs to 553 residues: MNIIDQVKQTLVEEIAASINKAGLADEIPDIKIEVPKDTKNGDYATNIAMVLTKIAKRNPREIAQAIVDNLDTEKAHVKQIDIAGPGFINFYLDNQYLTAIIPEAIEKGDQFGHVNESKGQNVLLEYVSANPTGDLHIGHARNAAVGDALANILTAAGYNVTREYYINDAGNQITNLARSIETRFFEALGDNSYSMPEDGYNGKDIIEIGKDLAEKHPEIKDYSEEARLKEFRKLGVEYEMAKLKNDLAEFNTHFDNWFSETSLYEKGEILEVLAKMKELGYTYEADGATWLRTTDFKDDKDRVLIKNDGTYTYFLPDIAYHFDKVKRGNDILIDLFGADHHGYINRLKASLETFGVDSNRLEIQIMQMVRLMENGKEVKMSKRTGNAITLREIMDEVGVDAARYFLTMRSPDSHFDFDMELAKEQSQDNPVYYAQYAHARICSILKQAKEQGIEVTAANDFTTITNEKAIELLKKVADFEPTIESAAEHRSAHRITNYIQDLASHFHKFYNAEKVLTDDIEKTKAHVAMIEAVRITLKNALAMVGVSAPESM.

The 'HIGH' region motif lies at 130 to 140; that stretch reads ANPTGDLHIGH.

This sequence belongs to the class-I aminoacyl-tRNA synthetase family. Monomer.

It is found in the cytoplasm. The catalysed reaction is tRNA(Arg) + L-arginine + ATP = L-arginyl-tRNA(Arg) + AMP + diphosphate. The sequence is that of Arginine--tRNA ligase from Staphylococcus aureus (strain USA300 / TCH1516).